The chain runs to 154 residues: Ribosome maturation factor RimP (154 aa).

It belongs to the RimP family.

The protein localises to the cytoplasm. Its function is as follows. Required for maturation of 30S ribosomal subunits. The polypeptide is Ribosome maturation factor RimP (Natranaerobius thermophilus (strain ATCC BAA-1301 / DSM 18059 / JW/NM-WN-LF)).